The chain runs to 325 residues: CRISPR-associated endonuclease Cas1 3 (325 aa).

Glu-152, His-217, and Glu-232 together coordinate Mn(2+).

The protein belongs to the CRISPR-associated endonuclease Cas1 family. Homodimer, forms a heterotetramer with a Cas2 homodimer. Mg(2+) is required as a cofactor. Mn(2+) serves as cofactor.

Functionally, CRISPR (clustered regularly interspaced short palindromic repeat), is an adaptive immune system that provides protection against mobile genetic elements (viruses, transposable elements and conjugative plasmids). CRISPR clusters contain spacers, sequences complementary to antecedent mobile elements, and target invading nucleic acids. CRISPR clusters are transcribed and processed into CRISPR RNA (crRNA). Acts as a dsDNA endonuclease. Involved in the integration of spacer DNA into the CRISPR cassette. The protein is CRISPR-associated endonuclease Cas1 3 of Thermodesulfovibrio yellowstonii (strain ATCC 51303 / DSM 11347 / YP87).